A 61-amino-acid polypeptide reads, in one-letter code: Large ribosomal subunit protein uL30 (61 aa).

The protein belongs to the universal ribosomal protein uL30 family. As to quaternary structure, part of the 50S ribosomal subunit.

The sequence is that of Large ribosomal subunit protein uL30 from Corynebacterium efficiens (strain DSM 44549 / YS-314 / AJ 12310 / JCM 11189 / NBRC 100395).